The following is a 375-amino-acid chain: 23S rRNA (uracil(747)-C(5))-methyltransferase RlmC (375 aa).

Residues Cys-3, Cys-11, Cys-14, and Cys-87 each coordinate [4Fe-4S] cluster. Residues Gln-212, Phe-241, Glu-262, and Asn-307 each coordinate S-adenosyl-L-methionine. Cys-334 functions as the Nucleophile in the catalytic mechanism.

The protein belongs to the class I-like SAM-binding methyltransferase superfamily. RNA M5U methyltransferase family. RlmC subfamily.

The catalysed reaction is uridine(747) in 23S rRNA + S-adenosyl-L-methionine = 5-methyluridine(747) in 23S rRNA + S-adenosyl-L-homocysteine + H(+). Catalyzes the formation of 5-methyl-uridine at position 747 (m5U747) in 23S rRNA. This is 23S rRNA (uracil(747)-C(5))-methyltransferase RlmC from Yersinia enterocolitica serotype O:8 / biotype 1B (strain NCTC 13174 / 8081).